A 363-amino-acid polypeptide reads, in one-letter code: MVSVDTPSSLGKPRGDPRQLYRVGGWDEEIYVLGIESTAHTFGVGIASTKPPYILVSVRDTYHPPKGGIHPREAASHHARVASEVILDALRTVGLSIRDIDAVAVALGPGLGPALRVGATIARGLAAYYGKPLVPVNHAVAHIEIARLYTGLGDPVVLYVSGGNTVVAAYAKARYRVFGETLDIALGNLLDTFARDAGIAPPYIVSGLHIVDRCAEAASKPADLPYVVKGMDVSFSGLLTAALRLWTKAGSEDEKAAVCLGLREVAYGSVVEVTERALAHTRKKSVMLTGGVAASPILRNKVRSMASYHGAVADWPPPQLAGDNGAMIAWTGLLNYLAGITVDVEESVVKQRWRLDVVEIPWR.

Fe cation-binding residues include His-138, His-142, and Tyr-159. Substrate-binding positions include Tyr-159–Gly-163, Asp-191, Asp-212, and Ser-295. Residue Asp-323 coordinates Fe cation.

This sequence belongs to the KAE1 / TsaD family. Fe(2+) serves as cofactor.

The protein localises to the cytoplasm. It catalyses the reaction L-threonylcarbamoyladenylate + adenosine(37) in tRNA = N(6)-L-threonylcarbamoyladenosine(37) in tRNA + AMP + H(+). In terms of biological role, required for the formation of a threonylcarbamoyl group on adenosine at position 37 (t(6)A37) in tRNAs that read codons beginning with adenine. Is probably involved in the transfer of the threonylcarbamoyl moiety of threonylcarbamoyl-AMP (TC-AMP) to the N6 group of A37. The protein is tRNA N6-adenosine threonylcarbamoyltransferase of Hyperthermus butylicus (strain DSM 5456 / JCM 9403 / PLM1-5).